We begin with the raw amino-acid sequence, 554 residues long: D-3-phosphoglycerate dehydrogenase (554 aa).

NAD(+) contacts are provided by residues lysine 177–isoleucine 178, aspartate 197, cysteine 256–arginine 258, and aspartate 282. Arginine 258 is a catalytic residue. Glutamate 287 is an active-site residue. The Proton donor role is filled by histidine 305. NAD(+) is bound at residue histidine 305–alanine 308. One can recognise an ACT domain in the interval methionine 482 to leucine 554.

The protein belongs to the D-isomer specific 2-hydroxyacid dehydrogenase family.

It carries out the reaction (2R)-3-phosphoglycerate + NAD(+) = 3-phosphooxypyruvate + NADH + H(+). The catalysed reaction is (R)-2-hydroxyglutarate + NAD(+) = 2-oxoglutarate + NADH + H(+). It functions in the pathway amino-acid biosynthesis; L-serine biosynthesis; L-serine from 3-phospho-D-glycerate: step 1/3. In terms of biological role, catalyzes the reversible oxidation of 3-phospho-D-glycerate to 3-phosphonooxypyruvate, the first step of the phosphorylated L-serine biosynthesis pathway. Also catalyzes the reversible oxidation of 2-hydroxyglutarate to 2-oxoglutarate. This chain is D-3-phosphoglycerate dehydrogenase (serA), found in Synechocystis sp. (strain ATCC 27184 / PCC 6803 / Kazusa).